Here is a 606-residue protein sequence, read N- to C-terminus: Large subunit GTPase 1 homolog (606 aa).

The tract at residues 1-21 is disordered; that stretch reads MGKKNKGGAPNLGRQLIKDRF. The 231-residue stretch at 165–395 folds into the CP-type G domain; that stretch reads WRQLWRVVER…LCDCPGLVMP (231 aa). Residue 213–216 participates in GTP binding; that stretch reads NKSD. Residues Ser-276 and Ser-279 each carry the phosphoserine modification. GTP contacts are provided by residues 344–351 and 388–391; these read GYPNVGKS and DCPG. Residues 574–606 are disordered; sequence LVAGNDPAAKPWRHVKKERREKLRKKFSHLDEH. A compositionally biased stretch (basic residues) spans 584 to 600; that stretch reads PWRHVKKERREKLRKKF.

This sequence belongs to the TRAFAC class YlqF/YawG GTPase family. LSG1 subfamily. Expressed in larval serotonergic neurons.

The protein resides in the cytoplasm. Functionally, GTPase required for the nuclear export of the 60S ribosomal subunit. Probably acts by mediating the release of Nmd3 from the 60S ribosomal subunit after export into the cytoplasm. Regulator of body size; acts in serotonergic neurons to regulate insulin signaling and thus exerts global growth control. The chain is Large subunit GTPase 1 homolog (Ns3) from Drosophila melanogaster (Fruit fly).